A 397-amino-acid polypeptide reads, in one-letter code: Bifunctional enzyme IspD/IspF (397 aa).

The 2-C-methyl-D-erythritol 4-phosphate cytidylyltransferase stretch occupies residues 1–236 (MSIAAVILAA…QKKMQMFPDI (236 aa)). Residues 237–397 (RTGNGYDVHS…NVLYPGEIPK (161 aa)) form a 2-C-methyl-D-erythritol 2,4-cyclodiphosphate synthase region. D243 and H245 together coordinate a divalent metal cation. Residues 243 to 245 (DVH) and 269 to 270 (HS) contribute to the 4-CDP-2-C-methyl-D-erythritol 2-phosphate site. H277 contributes to the a divalent metal cation binding site. 4-CDP-2-C-methyl-D-erythritol 2-phosphate is bound by residues 291–293 (DIG), 367–370 (TTNE), F374, and R377.

The protein in the N-terminal section; belongs to the IspD/TarI cytidylyltransferase family. IspD subfamily. In the C-terminal section; belongs to the IspF family. A divalent metal cation serves as cofactor.

It catalyses the reaction 2-C-methyl-D-erythritol 4-phosphate + CTP + H(+) = 4-CDP-2-C-methyl-D-erythritol + diphosphate. It carries out the reaction 4-CDP-2-C-methyl-D-erythritol 2-phosphate = 2-C-methyl-D-erythritol 2,4-cyclic diphosphate + CMP. Its pathway is isoprenoid biosynthesis; isopentenyl diphosphate biosynthesis via DXP pathway; isopentenyl diphosphate from 1-deoxy-D-xylulose 5-phosphate: step 2/6. It participates in isoprenoid biosynthesis; isopentenyl diphosphate biosynthesis via DXP pathway; isopentenyl diphosphate from 1-deoxy-D-xylulose 5-phosphate: step 4/6. Functionally, bifunctional enzyme that catalyzes the formation of 4-diphosphocytidyl-2-C-methyl-D-erythritol from CTP and 2-C-methyl-D-erythritol 4-phosphate (MEP) (IspD), and catalyzes the conversion of 4-diphosphocytidyl-2-C-methyl-D-erythritol 2-phosphate (CDP-ME2P) to 2-C-methyl-D-erythritol 2,4-cyclodiphosphate (ME-CPP) with a corresponding release of cytidine 5-monophosphate (CMP) (IspF). The sequence is that of Bifunctional enzyme IspD/IspF from Bartonella henselae (strain ATCC 49882 / DSM 28221 / CCUG 30454 / Houston 1) (Rochalimaea henselae).